The following is a 145-amino-acid chain: uncharacterized protein (145 aa).

A disordered region spans residues 37-123 (GKGTNTAKSS…MDREASYFAP (87 aa)). A compositionally biased stretch (polar residues) spans 38–63 (KGTNTAKSSGGNNGTNLNAKRSNTTQ).

This is an uncharacterized protein from Caenorhabditis elegans.